Consider the following 513-residue polypeptide: CUGBP Elav-like family member 1 (513 aa).

Residue Thr31 is modified to Phosphothreonine. 2 consecutive RRM domains span residues 43–126 (IKMF…PADS) and 135–215 (RKLF…FADT). Lys136 participates in a covalent cross-link: Glycyl lysine isopeptide (Lys-Gly) (interchain with G-Cter in SUMO2). 2 positions are modified to phosphoserine: Ser206 and Ser329. A disordered region spans residues 304–336 (TPSGTNALTTSSSPLSVLTSSGSSPSSSSSNSV). Residues 311–336 (LTTSSSPLSVLTSSGSSPSSSSSNSV) are compositionally biased toward low complexity. An RRM 3 domain is found at 428–506 (ANLFIYHLPQ…KRLKVQLKRS (79 aa)).

The protein belongs to the CELF/BRUNOL family. In terms of assembly, associates with polysomes. Interacts with HNRNPH1; the interaction in RNA-dependent. Interacts with PARN. Component of an EIF2 complex at least composed of CELF1/CUGBP1, CALR, CALR3, EIF2S1, EIF2S2, HSP90B1 and HSPA5.

The protein localises to the nucleus. It is found in the cytoplasm. In terms of biological role, RNA-binding protein implicated in the regulation of several post-transcriptional events. Involved in pre-mRNA alternative splicing, mRNA translation and stability. Mediates exon inclusion and/or exclusion in pre-mRNA that are subject to tissue-specific and developmentally regulated alternative splicing. Specifically activates exon 5 inclusion of cardiac isoforms of TNNT2 during heart remodeling at the juvenile to adult transition. Acts both as an activator and as a repressor of a pair of coregulated exons: promotes inclusion of the smooth muscle (SM) exon but exclusion of the non-muscle (NM) exon in actinin pre-mRNAs. Activates SM exon 5 inclusion by antagonizing the repressive effect of PTB. Promotes exclusion of exon 11 of the INSR pre-mRNA. Inhibits, together with HNRNPH1, insulin receptor (IR) pre-mRNA exon 11 inclusion in myoblast. Increases translation and controls the choice of translation initiation codon of CEBPB mRNA. Increases mRNA translation of CEBPB in aging liver. Increases translation of CDKN1A mRNA by antagonizing the repressive effect of CALR3. Mediates rapid cytoplasmic mRNA deadenylation. Recruits the deadenylase PARN to the poly(A) tail of EDEN-containing mRNAs to promote their deadenylation. Required for completion of spermatogenesis. Binds to (CUG)n triplet repeats in the 3'-UTR of transcripts such as DMPK and to Bruno response elements (BREs). Binds to muscle-specific splicing enhancer (MSE) intronic sites flanking the alternative exon 5 of TNNT2 pre-mRNA. Binds to AU-rich sequences (AREs or EDEN-like) localized in the 3'-UTR of JUN and FOS mRNAs. Binds to the IR RNA. Binds to the 5'-region of CDKN1A and CEBPB mRNAs. Binds with the 5'-region of CEBPB mRNA in aging liver. May be a specific regulator of miRNA biogenesis. Binds to primary microRNA pri-MIR140 and, with CELF2, negatively regulates the processing to mature miRNA. The protein is CUGBP Elav-like family member 1 (CELF1) of Pongo abelii (Sumatran orangutan).